We begin with the raw amino-acid sequence, 190 residues long: Elongation factor P-like protein (190 aa).

This sequence belongs to the elongation factor P family.

The sequence is that of Elongation factor P-like protein from Klebsiella pneumoniae subsp. pneumoniae (strain ATCC 700721 / MGH 78578).